The following is a 39-amino-acid chain: Cytochrome b559 subunit beta (39 aa).

The helical transmembrane segment at 14–30 (WLAVHGLAVPTVSFLGS) threads the bilayer. Residue H18 coordinates heme.

The protein belongs to the PsbE/PsbF family. Heterodimer of an alpha subunit and a beta subunit. PSII is composed of 1 copy each of membrane proteins PsbA, PsbB, PsbC, PsbD, PsbE, PsbF, PsbH, PsbI, PsbJ, PsbK, PsbL, PsbM, PsbT, PsbX, PsbY, PsbZ, Psb30/Ycf12, at least 3 peripheral proteins of the oxygen-evolving complex and a large number of cofactors. It forms dimeric complexes. Requires heme b as cofactor.

The protein resides in the plastid. Its subcellular location is the chloroplast thylakoid membrane. Its function is as follows. This b-type cytochrome is tightly associated with the reaction center of photosystem II (PSII). PSII is a light-driven water:plastoquinone oxidoreductase that uses light energy to abstract electrons from H(2)O, generating O(2) and a proton gradient subsequently used for ATP formation. It consists of a core antenna complex that captures photons, and an electron transfer chain that converts photonic excitation into a charge separation. In Muilla maritima (Sea muilla), this protein is Cytochrome b559 subunit beta.